Consider the following 73-residue polypeptide: MKHIDKIISHLVNNPEAFDQFKNGNLTLLNINEKEKKAILYAFEQGEVPRTSKWPPIEAISNFFEDDKRKSLI.

Residues 1-52 constitute a propeptide that is removed on maturation; the sequence is MKHIDKIISHLVNNPEAFDQFKNGNLTLLNINEKEKKAILYAFEQGEVPRTS. Trp54 carries the 3'-farnesyl-2',N2-cyclotryptophan lipid modification. The propeptide occupies 59–73; the sequence is AISNFFEDDKRKSLI.

In terms of assembly, interacts directly with the sensor histidine kinase ComP and stimulates its activity. Post-translationally, trp-54 is modified by farnesylation, which is essential for activity. Modified by the tryptophan prenyltransferase ComQ before export to the extracellular environment.

Its subcellular location is the secreted. Its function is as follows. Part of a major quorum-sensing system that regulates the development of genetic competence. Acts through the activation of the two-component regulatory system ComP/ComA composed of a sensor histidine kinase, ComP, and a response regulator, ComA. Activates the expression of the genes for biosynthesis of poly-gamma-glutamic acid (gamma-PGA), which is involved in biofilm formation in B.subtilis natto. In Bacillus subtilis subsp. natto (strain BEST195), this protein is ComX pheromone.